The chain runs to 233 residues: MTAFKQGDPTTLNRLYGRSIGKPLRTHQQHLVDNLLPQISPPAEGPVTAERLFGEDCPLHFEIGFGGGEHLVYRADLLPNHGFIGAEPFLNGVASCLSQVEEQRLANIRIHNGDALEVLDRVPDGALTMLYLLHPDPWPKNKHAKRRMMNDGPVKMFADKLKPGGEFRFGTDHPVYLRHALMVMRRHTDAFEWVVEGPSDWQNRPSGWPETRYEHKARTKFGHEVWYFRFRRR.

S-adenosyl-L-methionine is bound by residues Glu62, Glu87, Asp114, and Asp136. Asp136 is a catalytic residue. Residues Lys140, Asp172, and 211-214 contribute to the substrate site; that span reads TRYE.

This sequence belongs to the class I-like SAM-binding methyltransferase superfamily. TrmB family.

It carries out the reaction guanosine(46) in tRNA + S-adenosyl-L-methionine = N(7)-methylguanosine(46) in tRNA + S-adenosyl-L-homocysteine. It participates in tRNA modification; N(7)-methylguanine-tRNA biosynthesis. Functionally, catalyzes the formation of N(7)-methylguanine at position 46 (m7G46) in tRNA. The sequence is that of tRNA (guanine-N(7)-)-methyltransferase from Erythrobacter litoralis (strain HTCC2594).